We begin with the raw amino-acid sequence, 141 residues long: MAKKIVAIIKLALPAGKANPAPPVGPALGQHGVNIMAFCKEYNGKTSDQVGMVIPVEISVFEDRSFTFVLKTPPASVLIRKAAGVERGSNEPNKKNVGSITQDQLREIAQTKMPDLNANDIEAAMKIVAGTARNMGISVKD.

It belongs to the universal ribosomal protein uL11 family. Part of the ribosomal stalk of the 50S ribosomal subunit. Interacts with L10 and the large rRNA to form the base of the stalk. L10 forms an elongated spine to which L12 dimers bind in a sequential fashion forming a multimeric L10(L12)X complex. Post-translationally, one or more lysine residues are methylated.

In terms of biological role, forms part of the ribosomal stalk which helps the ribosome interact with GTP-bound translation factors. The chain is Large ribosomal subunit protein uL11 from Gloeothece citriformis (strain PCC 7424) (Cyanothece sp. (strain PCC 7424)).